Reading from the N-terminus, the 208-residue chain is Small ribosomal subunit protein uS4 (208 aa).

In terms of domain architecture, S4 RNA-binding spans 98-160 (CRLDNVVYRM…AKKQSRIQLA (63 aa)).

The protein belongs to the universal ribosomal protein uS4 family. In terms of assembly, part of the 30S ribosomal subunit. Contacts protein S5. The interaction surface between S4 and S5 is involved in control of translational fidelity.

Its function is as follows. One of the primary rRNA binding proteins, it binds directly to 16S rRNA where it nucleates assembly of the body of the 30S subunit. In terms of biological role, with S5 and S12 plays an important role in translational accuracy. This Ruthia magnifica subsp. Calyptogena magnifica protein is Small ribosomal subunit protein uS4.